Reading from the N-terminus, the 233-residue chain is tRNA (guanine-N(7)-)-methyltransferase (233 aa).

Positions 62, 87, 116, and 138 each coordinate S-adenosyl-L-methionine. Residue aspartate 138 is part of the active site. Residues lysine 142, aspartate 174, and 212 to 215 each bind substrate; that span reads TRYE.

Belongs to the class I-like SAM-binding methyltransferase superfamily. TrmB family.

The catalysed reaction is guanosine(46) in tRNA + S-adenosyl-L-methionine = N(7)-methylguanosine(46) in tRNA + S-adenosyl-L-homocysteine. It participates in tRNA modification; N(7)-methylguanine-tRNA biosynthesis. Catalyzes the formation of N(7)-methylguanine at position 46 (m7G46) in tRNA. The polypeptide is tRNA (guanine-N(7)-)-methyltransferase (Bartonella henselae (strain ATCC 49882 / DSM 28221 / CCUG 30454 / Houston 1) (Rochalimaea henselae)).